A 372-amino-acid chain; its full sequence is N-methyl-L-tryptophan oxidase (372 aa).

FAD is bound at residue 4–34 (DLIIIGSGSVGAAAGYYATRAGLNVLMTDAH). C308 carries the post-translational modification S-8alpha-FAD cysteine.

Belongs to the MSOX/MTOX family. MTOX subfamily. Monomer. FAD is required as a cofactor.

It catalyses the reaction N(alpha)-methyl-L-tryptophan + O2 + H2O = L-tryptophan + formaldehyde + H2O2. Functionally, catalyzes the oxidative demethylation of N-methyl-L-tryptophan. The sequence is that of N-methyl-L-tryptophan oxidase from Escherichia coli (strain SMS-3-5 / SECEC).